Here is a 339-residue protein sequence, read N- to C-terminus: Adenylosuccinate synthetase (339 aa).

Residues 12-18 (GDEGKGS) and 42-44 (GHS) contribute to the GTP site. The active-site Proton acceptor is the Asp13. Residues Asp13 and Gly42 each contribute to the Mg(2+) site. IMP is bound by residues 13–16 (DEGK), 40–43 (NAGH), Thr127, Arg141, Gln179, Thr194, and Arg256. His43 acts as the Proton donor in catalysis. Residue 252 to 258 (TVTGRRR) participates in substrate binding. GTP-binding positions include Arg258, 284 to 286 (MLD), and 324 to 326 (KTG).

The protein belongs to the adenylosuccinate synthetase family. In terms of assembly, homodimer. Requires Mg(2+) as cofactor.

Its subcellular location is the cytoplasm. The enzyme catalyses IMP + L-aspartate + GTP = N(6)-(1,2-dicarboxyethyl)-AMP + GDP + phosphate + 2 H(+). Its pathway is purine metabolism; AMP biosynthesis via de novo pathway; AMP from IMP: step 1/2. Plays an important role in the de novo pathway of purine nucleotide biosynthesis. Catalyzes the first committed step in the biosynthesis of AMP from IMP. The chain is Adenylosuccinate synthetase from Thermococcus sibiricus (strain DSM 12597 / MM 739).